The primary structure comprises 228 residues: Cytochrome c oxidase subunit 2 (228 aa).

The Mitochondrial intermembrane segment spans residues 1-26; the sequence is MRTWSNFNLQNSASPLMEQIIFFHDH. The helical transmembrane segment at 27–48 threads the bilayer; the sequence is TLIILIMITILVGYIMINLFFN. The Mitochondrial matrix segment spans residues 49 to 62; it reads KFINRFFLVGQMIE. The chain crosses the membrane as a helical span at residues 63–82; the sequence is LIWTVLPAITLIFIALPSLR. At 83–228 the chain is on the mitochondrial intermembrane side; sequence LLYLLDELNN…FINWINNYSY (146 aa). Cu cation-binding residues include His161, Cys196, Glu198, Cys200, His204, and Met207. Glu198 provides a ligand contact to Mg(2+).

The protein belongs to the cytochrome c oxidase subunit 2 family. As to quaternary structure, component of the cytochrome c oxidase (complex IV, CIV), a multisubunit enzyme composed of a catalytic core of 3 subunits and several supernumerary subunits. The complex exists as a monomer or a dimer and forms supercomplexes (SCs) in the inner mitochondrial membrane with ubiquinol-cytochrome c oxidoreductase (cytochrome b-c1 complex, complex III, CIII). Cu cation is required as a cofactor.

It localises to the mitochondrion inner membrane. It carries out the reaction 4 Fe(II)-[cytochrome c] + O2 + 8 H(+)(in) = 4 Fe(III)-[cytochrome c] + 2 H2O + 4 H(+)(out). Its function is as follows. Component of the cytochrome c oxidase, the last enzyme in the mitochondrial electron transport chain which drives oxidative phosphorylation. The respiratory chain contains 3 multisubunit complexes succinate dehydrogenase (complex II, CII), ubiquinol-cytochrome c oxidoreductase (cytochrome b-c1 complex, complex III, CIII) and cytochrome c oxidase (complex IV, CIV), that cooperate to transfer electrons derived from NADH and succinate to molecular oxygen, creating an electrochemical gradient over the inner membrane that drives transmembrane transport and the ATP synthase. Cytochrome c oxidase is the component of the respiratory chain that catalyzes the reduction of oxygen to water. Electrons originating from reduced cytochrome c in the intermembrane space (IMS) are transferred via the dinuclear copper A center (CU(A)) of subunit 2 and heme A of subunit 1 to the active site in subunit 1, a binuclear center (BNC) formed by heme A3 and copper B (CU(B)). The BNC reduces molecular oxygen to 2 water molecules using 4 electrons from cytochrome c in the IMS and 4 protons from the mitochondrial matrix. This Galleria mellonella (Greater wax moth) protein is Cytochrome c oxidase subunit 2 (COII).